A 49-amino-acid polypeptide reads, in one-letter code: Large ribosomal subunit protein eL40 (49 aa).

This sequence belongs to the eukaryotic ribosomal protein eL40 family.

In Methanopyrus kandleri (strain AV19 / DSM 6324 / JCM 9639 / NBRC 100938), this protein is Large ribosomal subunit protein eL40.